Here is a 467-residue protein sequence, read N- to C-terminus: 2-succinylbenzoate--CoA ligase (467 aa).

Belongs to the ATP-dependent AMP-binding enzyme family. MenE subfamily.

The catalysed reaction is 2-succinylbenzoate + ATP + CoA = 2-succinylbenzoyl-CoA + AMP + diphosphate. The protein operates within quinol/quinone metabolism; 1,4-dihydroxy-2-naphthoate biosynthesis; 1,4-dihydroxy-2-naphthoate from chorismate: step 5/7. Its pathway is quinol/quinone metabolism; menaquinone biosynthesis. Converts 2-succinylbenzoate (OSB) to 2-succinylbenzoyl-CoA (OSB-CoA). This Listeria monocytogenes serovar 1/2a (strain ATCC BAA-679 / EGD-e) protein is 2-succinylbenzoate--CoA ligase.